Here is a 138-residue protein sequence, read N- to C-terminus: Regulator of ribonuclease activity B (138 aa).

Positions 114–138 (YFEDPNGEDGDDEDFVDEDDDGVRH) are disordered. Acidic residues predominate over residues 118–138 (PNGEDGDDEDFVDEDDDGVRH).

Belongs to the RraB family. Interacts with the C-terminal region of Rne.

The protein resides in the cytoplasm. Functionally, globally modulates RNA abundance by binding to RNase E (Rne) and regulating its endonucleolytic activity. Can modulate Rne action in a substrate-dependent manner by altering the composition of the degradosome. This Escherichia coli (strain K12) protein is Regulator of ribonuclease activity B.